The sequence spans 200 residues: Probable GTP-binding protein EngB (200 aa).

In terms of domain architecture, EngB-type G spans 26–200 (SIPEVALAGR…IYEIAQCIKK (175 aa)). GTP is bound by residues 34–41 (GRSNVGKS), 61–65 (GCTRQ), 80–83 (DLPG), 147–150 (TKID), and 179–181 (VSS). The Mg(2+) site is built by Ser-41 and Thr-63.

It belongs to the TRAFAC class TrmE-Era-EngA-EngB-Septin-like GTPase superfamily. EngB GTPase family. Mg(2+) serves as cofactor.

In terms of biological role, necessary for normal cell division and for the maintenance of normal septation. This is Probable GTP-binding protein EngB from Ehrlichia ruminantium (strain Welgevonden).